A 230-amino-acid polypeptide reads, in one-letter code: Orotidine 5'-phosphate decarboxylase (230 aa).

Residues Asp-10, Lys-32, 59 to 68, Thr-119, Arg-180, Gln-189, Gly-209, and Arg-210 each bind substrate; that span reads DLKYHDIPNT. Lys-61 (proton donor) is an active-site residue.

Belongs to the OMP decarboxylase family. Type 1 subfamily. Homodimer.

It catalyses the reaction orotidine 5'-phosphate + H(+) = UMP + CO2. The protein operates within pyrimidine metabolism; UMP biosynthesis via de novo pathway; UMP from orotate: step 2/2. Catalyzes the decarboxylation of orotidine 5'-monophosphate (OMP) to uridine 5'-monophosphate (UMP). The protein is Orotidine 5'-phosphate decarboxylase of Haemophilus ducreyi (strain 35000HP / ATCC 700724).